Consider the following 316-residue polypeptide: Pantothenate kinase (316 aa).

Residue 95–102 (GSVAVGKS) coordinates ATP.

The protein belongs to the prokaryotic pantothenate kinase family.

It localises to the cytoplasm. It catalyses the reaction (R)-pantothenate + ATP = (R)-4'-phosphopantothenate + ADP + H(+). It participates in cofactor biosynthesis; coenzyme A biosynthesis; CoA from (R)-pantothenate: step 1/5. In Serratia proteamaculans (strain 568), this protein is Pantothenate kinase.